Here is a 238-residue protein sequence, read N- to C-terminus: MRPSGRQPDQLRPVTLTRHYTRHAEGSVLVCFGDTHVLCTASVLPKVPPHKKGSGEGWVTAEYGMLPRSTHTRSDREAARGKQSGRTQEIQRLIGRAMRSVFDLSALGEHTIHLDCDVLQADGGTRTASITGAFVAAHDAISVMRKKGQLTGEPIRDFVAAVSVGVVDGVPVLDLDYPEDASCDTDMNIVMTGAGGFVEVQGTAEGTPFTRTEMDALLGLADHGIRTLIGLQKQALGL.

The segment at 67–87 (PRSTHTRSDREAARGKQSGRT) is disordered. Residues Arg86 and 124–126 (GTR) contribute to the phosphate site.

This sequence belongs to the RNase PH family. As to quaternary structure, homohexameric ring arranged as a trimer of dimers.

The catalysed reaction is tRNA(n+1) + phosphate = tRNA(n) + a ribonucleoside 5'-diphosphate. Phosphorolytic 3'-5' exoribonuclease that plays an important role in tRNA 3'-end maturation. Removes nucleotide residues following the 3'-CCA terminus of tRNAs; can also add nucleotides to the ends of RNA molecules by using nucleoside diphosphates as substrates, but this may not be physiologically important. Probably plays a role in initiation of 16S rRNA degradation (leading to ribosome degradation) during starvation. The protein is Ribonuclease PH of Ralstonia nicotianae (strain ATCC BAA-1114 / GMI1000) (Ralstonia solanacearum).